The sequence spans 495 residues: Glutamyl-tRNA(Gln) amidotransferase subunit A (495 aa).

Active-site charge relay system residues include Lys78 and Ser158. Ser182 acts as the Acyl-ester intermediate in catalysis.

It belongs to the amidase family. GatA subfamily. In terms of assembly, heterotrimer of A, B and C subunits.

It carries out the reaction L-glutamyl-tRNA(Gln) + L-glutamine + ATP + H2O = L-glutaminyl-tRNA(Gln) + L-glutamate + ADP + phosphate + H(+). Functionally, allows the formation of correctly charged Gln-tRNA(Gln) through the transamidation of misacylated Glu-tRNA(Gln) in organisms which lack glutaminyl-tRNA synthetase. The reaction takes place in the presence of glutamine and ATP through an activated gamma-phospho-Glu-tRNA(Gln). This Ruegeria sp. (strain TM1040) (Silicibacter sp.) protein is Glutamyl-tRNA(Gln) amidotransferase subunit A.